The following is a 453-amino-acid chain: DDB1- and CUL4-associated factor 12 (453 aa).

The segment covering Met1–Ala12 has biased composition (basic residues). A disordered region spans residues Met1–His34. A required for nuclear location and interaction with MOV10 region spans residues Met1 to Arg38. Ser15 carries the post-translational modification Phosphoserine. 6 WD repeats span residues Glu81–Ile122, Thr123–Pro175, Val176–Asp242, Ile243–Ser286, Lys287–Val331, and Lys332–Asp366.

This sequence belongs to the WD repeat DCAF12 family. In terms of assembly, component of the DCX(DCAF12) E3 ubiquitin ligase complex, at least composed of CUL4 (CUL4A or CUL4B), DDB1, DCAF12 and RBX1. Highly expressed in lung cancer tissues and some cancer cell lines. Restricted expression in normal testis.

The protein resides in the cytoplasm. Its subcellular location is the cytoskeleton. It localises to the microtubule organizing center. The protein localises to the centrosome. It is found in the nucleus. The protein operates within protein modification; protein ubiquitination. Substrate-recognition component of a DCX (DDB1-CUL4-X-box) E3 ubiquitin-protein ligase complex of the DesCEND (destruction via C-end degrons) pathway, which recognizes a C-degron located at the extreme C terminus of target proteins, leading to their ubiquitination and degradation. The C-degron recognized by the DesCEND pathway is usually a motif of less than ten residues and can be present in full-length proteins, truncated proteins or proteolytically cleaved forms. The DCX(DCAF12) complex specifically recognizes proteins with a diglutamate (Glu-Glu) at the C-terminus, such as MAGEA3, MAGEA6 and CCT5, leading to their ubiquitination and degradation. Ubiquitination of MAGEA3, MAGEA6 by DCX(DCAF12) complex is required for starvation-induced autophagy. Also directly recognizes the C-terminal glutamate-leucine (Glu-Leu) degron as an alternative degron in proteins such as MOV10, leading to their ubiquitination and degradation. Controls the protein level of MOV10 during spermatogenesis and in T cells, especially after their activation. This chain is DDB1- and CUL4-associated factor 12, found in Homo sapiens (Human).